Consider the following 357-residue polypeptide: Cyclin-Y (357 aa).

The segment covering 1 to 13 (MGNSSCCLRTRSS) has biased composition (polar residues). Positions 1–23 (MGNSSCCLRTRSSSGEDKSYNND) are disordered. One can recognise a Cyclin N-terminal domain in the interval 186–284 (PDHRNIYRFV…RFLECLDFNI (99 aa)).

It belongs to the cyclin family. Interacts with pct-1; the interaction is required to activate pct-1.

It localises to the cytoplasm. Its subcellular location is the cell projection. The protein resides in the dendrite. It is found in the axon. Its function is as follows. In association with pct-1, regulates the trafficking of synaptic vesicle precursors in DA motor neurons by promoting anterograde trafficking to the axon and preventing dynein-dependent trafficking to the dendrite. May also regulate synaptic vesicle trafficking in DD motor neurons and in RIA interneurons. Involved in synapse formation during DD motor neuron remodeling by disassembling ventral presynaptic structures. May activate cdk-5. In Caenorhabditis elegans, this protein is Cyclin-Y.